Here is a 408-residue protein sequence, read N- to C-terminus: Multidrug resistance protein MdtG (408 aa).

The next 10 membrane-spanning stretches (helical) occupy residues 16–36, 58–78, 92–112, 115–135, 146–166, 173–193, 221–241, 256–276, 290–310, and 378–398; these read LIVA…VMPF, IVFS…GGLA, LGMG…QFLI, ALLG…ATQV, TLST…GLLA, PVFF…LFCI, ILSL…IAPI, VAFI…LSAP, ILIT…YVQT, and AVFL…WNSL.

It belongs to the major facilitator superfamily. DHA1 family. MdtG (TC 2.A.1.2.20) subfamily.

It localises to the cell inner membrane. Confers resistance to fosfomycin and deoxycholate. The polypeptide is Multidrug resistance protein MdtG (Escherichia coli (strain SMS-3-5 / SECEC)).